The primary structure comprises 294 residues: Sperm acrosome membrane-associated protein 1 (294 aa).

The signal sequence occupies residues 1–29 (MSPRGTGCSAGLLMTVGWLLLAGLQSARG). Residues 30-221 (TNVTAAVQDA…LPATDAALIF (192 aa)) lie on the Extracellular side of the membrane. N-linked (GlcNAc...) asparagine glycosylation is present at N31. Residues 42–70 (AHEGEGEEETENNDSETAENYAPPETEDV) are disordered. The segment covering 46–58 (EGEEETENNDSET) has biased composition (acidic residues). A helical transmembrane segment spans residues 222–242 (VLTIGVIICVFIIFLLIFIII). The Cytoplasmic segment spans residues 243–294 (NWAAVKAFWGAKASTPEVQSEQSSVRYKDSTSLDQLPTEMPGEDDALSEWNE). S256 is subject to Phosphoserine. Positions 258 to 267 (PEVQSEQSSV) are enriched in polar residues. A disordered region spans residues 258–294 (PEVQSEQSSVRYKDSTSLDQLPTEMPGEDDALSEWNE). Y269 bears the Phosphotyrosine mark. Residues 283-294 (PGEDDALSEWNE) are compositionally biased toward acidic residues. Residue S290 is modified to Phosphoserine.

As to quaternary structure, interacts with CYLC1; the interaction may be relevant for proper acrosome attachment to the nuclear envelope. In terms of processing, N-glycosylated. Testis specific.

It is found in the cytoplasmic vesicle. Its subcellular location is the secretory vesicle. The protein resides in the acrosome inner membrane. Plays a role in acrosome formation and establishment of normal sperm morphology during spermatogenesis. Important for male fertility. The sequence is that of Sperm acrosome membrane-associated protein 1 (SPACA1) from Homo sapiens (Human).